A 305-amino-acid chain; its full sequence is Maximins-S type B/C (305 aa).

Positions 1-18 (MNFNYFILVLFFITSGHA) are cleaved as a signal peptide. Propeptides lie at residues 19–35 (KSETREVHQEAENHIKR) and 52–65 (SAEEQNLAEHLVTR). Asn-83 is modified (asparagine amide). Positions 87–100 (SAEEQDLAEHLVTR) are excised as a propeptide. Asparagine amide is present on Asn-118. Residues 122 to 135 (SAEEQDLAEDLVTR) constitute a propeptide that is removed on maturation. Lys-153 is modified (lysine amide). A propeptide spanning residues 157–170 (SAEDQDLAEDLVTR) is cleaved from the precursor. Asn-188 carries the post-translational modification Asparagine amide. The propeptide occupies 192-205 (SAEEQDLAEHLVTR). The residue at position 223 (Asn-223) is an Asparagine amide. A propeptide spanning residues 227–240 (SAEEQDLSEDLVTR) is cleaved from the precursor. The residue at position 258 (Asn-258) is an Asparagine amide. A propeptide spanning residues 262–275 (SAEEQDLVEDLVTR) is cleaved from the precursor. Lys-293 carries the lysine amide modification. Positions 297–305 (SAEQEKDMK) are excised as a propeptide.

Belongs to the maximin-S family. Expressed by the skin dorsal glands.

The protein resides in the secreted. Maximin-S1 has no antimicrobial activity. Has no hemolytic activity. Its function is as follows. Maximin-S2 has an activity against mycoplasma but has no activity against common Gram-positive and Gram-negative bacteria nor fungi. Has no hemolytic activity. In terms of biological role, maximin-S3 has an activity against mycoplasma but has no activity against common Gram-positive and Gram-negative bacteria nor fungi. Has no hemolytic activity. Functionally, maximin-S4 has an activity against mycoplasma but has no activity against common Gram-positive and Gram-negative bacteria nor fungi. Has no hemolytic activity. Maximin-S5 has an activity against mycoplasma but has no activity against common Gram-positive and Gram-negative bacteria nor fungi. Has no hemolytic activity. This chain is Maximins-S type B/C, found in Bombina maxima (Giant fire-bellied toad).